The following is a 246-amino-acid chain: DNA polymerase sliding clamp 3 (246 aa).

It belongs to the PCNA family. In terms of assembly, the subunits circularize to form a toroid; DNA passes through its center. Replication factor C (RFC) is required to load the toroid on the DNA. Forms dimeric complexes with PCNA1 and PCNA2, and trimeric complexes with PCNA123 and PCNA323; does not form homotrimers. Crystal structures show a heterotetramer of 2 PCNA2 and 2 PCNA3, which would be large enough to clamp a Holliday junction.

Functionally, sliding clamp subunit that acts as a moving platform for DNA processing. Responsible for tethering the catalytic subunit of DNA polymerase and other proteins to DNA during high-speed replication. Both trimeric complexes inhibit DNA ligase and both 3'-5' and 5'-3' activity of Hel308 (Hjm) helicase, but stimulate Hjc, the Holliday junction cleavage enzyme. This is DNA polymerase sliding clamp 3 from Sulfurisphaera tokodaii (strain DSM 16993 / JCM 10545 / NBRC 100140 / 7) (Sulfolobus tokodaii).